Here is a 339-residue protein sequence, read N- to C-terminus: MTLRVAINGFGRIGRNVVRALYESGRRAEISVVAINELADAAGMAHLLKYDTSHGRFAWDVRQEGEQLWIGNDVIRLLHERDINALPWKALDVDVVLDCTGVYGSRADGIAHLEAGARKVLFSHPGGNDLDATVVYGVNEEELRAEHRIVSNASCTTNCIIPIIKLMDDAFGIESGTVTTIHSAMHDQQVIDAYHPDLRRTRAASQSIIPVDTRLAAGITRIFPKFHDRFEAIAVRVPTINVTAIDLSVTVQKPVKAYEVNLLLQKAAQGAFHGIVDYTELPLVSTDFNHDPHSAIVDGTQTRVSGAHLIKTLVWCDNEWGFANRMLDTTLAMAAIGFR.

Residues 12–13 (RI) and arginine 81 contribute to the NAD(+) site. Substrate is bound by residues 154 to 156 (SCT), arginine 200, 213 to 214 (TR), and arginine 236. Cysteine 155 serves as the catalytic Nucleophile. Position 318 (asparagine 318) interacts with NAD(+).

The protein belongs to the glyceraldehyde-3-phosphate dehydrogenase family. Epd subfamily. Homotetramer.

It localises to the cytoplasm. The catalysed reaction is D-erythrose 4-phosphate + NAD(+) + H2O = 4-phospho-D-erythronate + NADH + 2 H(+). The protein operates within cofactor biosynthesis; pyridoxine 5'-phosphate biosynthesis; pyridoxine 5'-phosphate from D-erythrose 4-phosphate: step 1/5. Catalyzes the NAD-dependent conversion of D-erythrose 4-phosphate to 4-phosphoerythronate. This Cronobacter sakazakii (strain ATCC BAA-894) (Enterobacter sakazakii) protein is D-erythrose-4-phosphate dehydrogenase.